A 249-amino-acid chain; its full sequence is Proteasome subunit alpha type-7 (249 aa).

Belongs to the peptidase T1A family. The 26S proteasome consists of a 20S proteasome core and two 19S regulatory subunits. The 20S proteasome core is a barrel-shaped complex made of 28 subunits that are arranged in four stacked rings. The two outer rings are each formed by seven alpha subunits, and the two inner rings are formed by seven beta subunits. The proteolytic activity is exerted by three beta-subunits PSMB5, PSMB6 and PSMB7. PSMA7 interacts directly with the PSMG1-PSMG2 heterodimer which promotes 20S proteasome assembly. Interacts with HIF1A. Interacts with RAB7A. Interacts with PRKN. Interacts with ABL1 and ABL2. Interacts with EMAP2. Interacts with MAVS.

It is found in the cytoplasm. The protein localises to the nucleus. In terms of biological role, component of the 20S core proteasome complex involved in the proteolytic degradation of most intracellular proteins. This complex plays numerous essential roles within the cell by associating with different regulatory particles. Associated with two 19S regulatory particles, forms the 26S proteasome and thus participates in the ATP-dependent degradation of ubiquitinated proteins. The 26S proteasome plays a key role in the maintenance of protein homeostasis by removing misfolded or damaged proteins that could impair cellular functions, and by removing proteins whose functions are no longer required. Associated with the PA200 or PA28, the 20S proteasome mediates ubiquitin-independent protein degradation. This type of proteolysis is required in several pathways including spermatogenesis (20S-PA200 complex) or generation of a subset of MHC class I-presented antigenic peptides (20S-PA28 complex). Inhibits the transactivation function of HIF-1A under both normoxic and hypoxia-mimicking conditions. The interaction with EMAP2 increases the proteasome-mediated HIF-1A degradation under the hypoxic conditions. Plays a role in hepatitis C virus internal ribosome entry site-mediated translation. Mediates nuclear translocation of the androgen receptor (AR) and thereby enhances androgen-mediated transactivation. Promotes MAVS degradation and thereby negatively regulates MAVS-mediated innate immune response. This Gallus gallus (Chicken) protein is Proteasome subunit alpha type-7 (PSMA7).